Reading from the N-terminus, the 305-residue chain is Glycine--tRNA ligase alpha subunit (305 aa).

It belongs to the class-II aminoacyl-tRNA synthetase family. As to quaternary structure, tetramer of two alpha and two beta subunits.

The protein resides in the cytoplasm. It catalyses the reaction tRNA(Gly) + glycine + ATP = glycyl-tRNA(Gly) + AMP + diphosphate. The sequence is that of Glycine--tRNA ligase alpha subunit from Vibrio parahaemolyticus serotype O3:K6 (strain RIMD 2210633).